We begin with the raw amino-acid sequence, 310 residues long: Nucleotide-binding protein MAP_1147 (310 aa).

Residue 30–37 (GLSGAGRG) participates in ATP binding. 81–84 (DVRS) serves as a coordination point for GTP.

Belongs to the RapZ-like family.

In terms of biological role, displays ATPase and GTPase activities. The chain is Nucleotide-binding protein MAP_1147 from Mycolicibacterium paratuberculosis (strain ATCC BAA-968 / K-10) (Mycobacterium paratuberculosis).